Here is a 546-residue protein sequence, read N- to C-terminus: Chaperonin GroEL 2 (546 aa).

ATP-binding positions include 30 to 33 (TLGP), Lys51, 87 to 91 (DGTTT), Gly415, and Asp495.

It belongs to the chaperonin (HSP60) family. As to quaternary structure, forms a cylinder of 14 subunits composed of two heptameric rings stacked back-to-back. Interacts with the co-chaperonin GroES.

The protein resides in the cytoplasm. The catalysed reaction is ATP + H2O + a folded polypeptide = ADP + phosphate + an unfolded polypeptide.. Together with its co-chaperonin GroES, plays an essential role in assisting protein folding. The GroEL-GroES system forms a nano-cage that allows encapsulation of the non-native substrate proteins and provides a physical environment optimized to promote and accelerate protein folding. This Burkholderia cenocepacia (strain HI2424) protein is Chaperonin GroEL 2.